A 215-amino-acid polypeptide reads, in one-letter code: MKRFFGVSNNQPAPTLDEATKRIGGRMGQMDEKINGLNQELLAYDKQIKATRPGPAQNAIKQKAIRVLQQKKMYERQRDQMASTSFNMEQTKFATESMRDTITTVSAMKQGAKDMKTQLKHIKIEDVDDMQDEMQDLLDYNNEIQESLGRAYQTPDTLDESELEAELMSMGEELELEASMPSYLMTPSVPTTDPHQSSVDEYGLPIGQEASQQVV.

Residues 29-81 are a coiled coil; it reads QMDEKINGLNQELLAYDKQIKATRPGPAQNAIKQKAIRVLQQKKMYERQRDQM. The tract at residues 186–215 is disordered; it reads TPSVPTTDPHQSSVDEYGLPIGQEASQQVV. A compositionally biased stretch (polar residues) spans 188–199; that stretch reads SVPTTDPHQSSV.

Belongs to the SNF7 family. Probable peripherally associated component of the endosomal sorting required for transport complex III (ESCRT-III).

The protein localises to the endosome membrane. Probable peripherally associated component of the endosomal sorting required for transport complex III (ESCRT-III) which is involved in multivesicular bodies (MVBs) formation and sorting of endosomal cargo proteins into MVBs. MVBs contain intraluminal vesicles (ILVs) that are generated by invagination and scission from the limiting membrane of the endosome and are delivered to lysosomes enabling degradation of membrane proteins. This is Charged multivesicular body protein 5 (chmp5) from Dictyostelium discoideum (Social amoeba).